Reading from the N-terminus, the 555-residue chain is Hydroxylamine reductase (555 aa).

The [4Fe-4S] cluster site is built by C5, C8, C17, and C23. Hybrid [4Fe-2O-2S] cluster contacts are provided by H248, E272, C316, C408, C436, C461, E496, and K498. C408 carries the post-translational modification Cysteine persulfide.

This sequence belongs to the HCP family. [4Fe-4S] cluster serves as cofactor. It depends on hybrid [4Fe-2O-2S] cluster as a cofactor.

Its subcellular location is the cytoplasm. The catalysed reaction is A + NH4(+) + H2O = hydroxylamine + AH2 + H(+). Functionally, catalyzes the reduction of hydroxylamine to form NH(3) and H(2)O. The sequence is that of Hydroxylamine reductase from Halothermothrix orenii (strain H 168 / OCM 544 / DSM 9562).